We begin with the raw amino-acid sequence, 396 residues long: Beta-peptidyl aminopeptidase BapA (396 aa).

The signal sequence occupies residues Met-1–Ala-21. The active-site Nucleophile is Ser-271. Catalysis depends on proton donor/acceptor residues Ser-309 and Asp-311.

The protein belongs to the peptidase S58 family. Heterooctamer of 4 heterodimers ((alpha:beta)4); each heterodimer is composed of an alpha subunit and a beta subunit processed from the same precursor. Post-translationally, autoproteolytic processing to generate the alpha and beta subunit is required for self-activation and is proposed to use a similar mechanism as substrate cleavage.

It localises to the periplasm. It carries out the reaction Cleaves N-terminal beta-homoamino acids from peptides composed of 2 to 6 amino acids.. Its activity is regulated as follows. Inhibited by AEBSF (4-(2-aminoethyl)benzenesulfonyl fluoride, Pefabloc SC). Beta-aminopeptidase that can cleave synthetic beta-peptides which consist of backbone-elongated beta-amino acid residues that are not processed by common proteolytic enzymes. Can cleave the beta-peptides beta-homoVal-beta-homoAla-beta-homoLeu and beta-homoAla-beta-homoLeu. Requires a beta-amino acid at the N-terminus of peptide substrates and cleaves the peptide bond between the N-terminal beta-amino acid and the amino acid at the second position of tripeptidic substrates of the general structure H-betahXaa-Ile-betahTyr-OH according to the following preferences with regard to the side chain of the N-terminal beta-amino acid: aliphatic and aromatic &gt; OH-containing &gt; hydrogen, basic and polar. beta-homoVal-beta-homoAla-beta-homoLeu and beta-homoAla-beta-homoLeu. This chain is Beta-peptidyl aminopeptidase BapA, found in Sphingosinicella microcystinivorans.